The chain runs to 226 residues: UPF0319 protein YPO1442/y2728/YP_1333 (226 aa).

The N-terminal stretch at 1-20 (MKLGLVAGMLAVCFSFSSVA) is a signal peptide.

The protein belongs to the UPF0319 family.

This Yersinia pestis protein is UPF0319 protein YPO1442/y2728/YP_1333.